The following is a 534-amino-acid chain: Corneodesmosin (534 aa).

The signal sequence occupies residues 1-32 (MGLSRAPWMGRVGGRGMMALLLAGLLLPGTLA). Disordered regions lie at residues 38-252 (FSDP…HSVS) and 396-497 (CSPF…GSAG). Composition is skewed to low complexity over residues 64–82 (GFSSYSGSSGSGSSISSAS), 107–185 (GYSQ…SGSA), 200–236 (SQLGQSSSFSQTSGQRVSSNQRPCSSDIPDSPCSGGP), 397–415 (SPFSSRVHSSSSISSSSGS), and 431–446 (PGTGSFSSSSSSQSSG). The segment covering 454-472 (GSKSSSSGHPCMSVSSLTL) has biased composition (polar residues).

It is found in the secreted. Functionally, important for the epidermal barrier integrity. This Macaca mulatta (Rhesus macaque) protein is Corneodesmosin (CDSN).